Here is a 438-residue protein sequence, read N- to C-terminus: Xylose isomerase (438 aa).

Residues His100 and Asp103 contribute to the active site. Mg(2+)-binding residues include Glu231, Glu267, His270, Asp295, Asp306, Asp308, and Asp338.

It belongs to the xylose isomerase family. Homotetramer. Mg(2+) serves as cofactor.

The protein resides in the cytoplasm. It catalyses the reaction alpha-D-xylose = alpha-D-xylulofuranose. The sequence is that of Xylose isomerase from Pseudomonas syringae pv. tomato (strain ATCC BAA-871 / DC3000).